Here is a 536-residue protein sequence, read N- to C-terminus: Phosphoenolpyruvate carboxykinase (ATP) (536 aa).

Substrate is bound by residues Arg-62, Tyr-203, and Lys-209. ATP-binding positions include Lys-209, His-228, and 244–252 (GLSGTGKTT). Positions 209 and 228 each coordinate Mn(2+). Asp-265 is a Mn(2+) binding site. ATP-binding positions include Glu-293, Arg-329, 445 to 446 (RI), and Thr-451. Residue Arg-329 coordinates substrate.

This sequence belongs to the phosphoenolpyruvate carboxykinase (ATP) family. As to quaternary structure, monomer. Mn(2+) serves as cofactor.

It localises to the cytoplasm. The enzyme catalyses oxaloacetate + ATP = phosphoenolpyruvate + ADP + CO2. It functions in the pathway carbohydrate biosynthesis; gluconeogenesis. Its function is as follows. Involved in the gluconeogenesis. Catalyzes the conversion of oxaloacetate (OAA) to phosphoenolpyruvate (PEP) through direct phosphoryl transfer between the nucleoside triphosphate and OAA. This is Phosphoenolpyruvate carboxykinase (ATP) from Actinobacillus pleuropneumoniae serotype 5b (strain L20).